A 323-amino-acid polypeptide reads, in one-letter code: Lipoyl synthase (323 aa).

[4Fe-4S] cluster contacts are provided by Cys61, Cys66, Cys72, Cys87, Cys91, Cys94, and Ser300. Residues 73–289 (WDKKHATFMI…ETVAYSKGFL (217 aa)) enclose the Radical SAM core domain.

The protein belongs to the radical SAM superfamily. Lipoyl synthase family. It depends on [4Fe-4S] cluster as a cofactor.

Its subcellular location is the cytoplasm. It catalyses the reaction [[Fe-S] cluster scaffold protein carrying a second [4Fe-4S](2+) cluster] + N(6)-octanoyl-L-lysyl-[protein] + 2 oxidized [2Fe-2S]-[ferredoxin] + 2 S-adenosyl-L-methionine + 4 H(+) = [[Fe-S] cluster scaffold protein] + N(6)-[(R)-dihydrolipoyl]-L-lysyl-[protein] + 4 Fe(3+) + 2 hydrogen sulfide + 2 5'-deoxyadenosine + 2 L-methionine + 2 reduced [2Fe-2S]-[ferredoxin]. It functions in the pathway protein modification; protein lipoylation via endogenous pathway; protein N(6)-(lipoyl)lysine from octanoyl-[acyl-carrier-protein]: step 2/2. Catalyzes the radical-mediated insertion of two sulfur atoms into the C-6 and C-8 positions of the octanoyl moiety bound to the lipoyl domains of lipoate-dependent enzymes, thereby converting the octanoylated domains into lipoylated derivatives. This is Lipoyl synthase from Rhizobium etli (strain CIAT 652).